Reading from the N-terminus, the 183-residue chain is Dual-action ribosomal maturation protein DarP (183 aa).

The protein belongs to the DarP family.

It is found in the cytoplasm. Functionally, member of a network of 50S ribosomal subunit biogenesis factors which assembles along the 30S-50S interface, preventing incorrect 23S rRNA structures from forming. Promotes peptidyl transferase center (PTC) maturation. In Shigella flexneri, this protein is Dual-action ribosomal maturation protein DarP.